The primary structure comprises 247 residues: MAERPQRVPASTEQESALVLFSGGQDSTACLAWALEYFSRVETVGFAYGQRHDVELSAREEVLDGLRALRPDWAARLGSDRVLDAGVLGEISDTALTQDAEIAYDARGLPTTFVPGRNLLFFTLAAAVAHRRGIRHLVAGVCETDFSGYPDCRDDTVKSLQVTLNLGMAERLVLHTPLMWLDKAQTWMLAEQLGGSALVDLTVEASHTCYYGMREQRHEWGYGCGECPACRLRAEGWHRFRHGSGAQ.

An ATP-binding site is contributed by 21–31 (FSGGQDSTACL). Zn(2+) contacts are provided by C209, C224, C227, and C230.

The protein belongs to the QueC family. It depends on Zn(2+) as a cofactor.

It carries out the reaction 7-carboxy-7-deazaguanine + NH4(+) + ATP = 7-cyano-7-deazaguanine + ADP + phosphate + H2O + H(+). It functions in the pathway purine metabolism; 7-cyano-7-deazaguanine biosynthesis. In terms of biological role, catalyzes the ATP-dependent conversion of 7-carboxy-7-deazaguanine (CDG) to 7-cyano-7-deazaguanine (preQ(0)). This chain is 7-cyano-7-deazaguanine synthase, found in Halorhodospira halophila (strain DSM 244 / SL1) (Ectothiorhodospira halophila (strain DSM 244 / SL1)).